The primary structure comprises 163 residues: Ureidoglycolate lyase (163 aa).

Belongs to the ureidoglycolate lyase family. In terms of assembly, homodimer. Ni(2+) is required as a cofactor.

It catalyses the reaction (S)-ureidoglycolate = urea + glyoxylate. It participates in nitrogen metabolism; (S)-allantoin degradation. In terms of biological role, catalyzes the catabolism of the allantoin degradation intermediate (S)-ureidoglycolate, generating urea and glyoxylate. Involved in the utilization of allantoin as nitrogen source. The protein is Ureidoglycolate lyase of Mesorhizobium japonicum (strain LMG 29417 / CECT 9101 / MAFF 303099) (Mesorhizobium loti (strain MAFF 303099)).